The primary structure comprises 223 residues: Protein Mis18-alpha (223 aa).

The tract at residues 1-30 (MAGTFSLEPCSTSSSCNHQGKRSESSLLEK) is disordered. Residues 9–18 (PCSTSSSCNH) show a composition bias toward polar residues. A compositionally biased stretch (basic and acidic residues) spans 21–30 (KRSESSLLEK). Phosphoserine is present on residues S33, S36, and S37. Positions 71 to 169 (PLVFLCTRCR…SVEAVESYTL (99 aa)) constitute a Mis18 domain. Zn(2+)-binding residues include C76, C79, C132, and C135. Residue K153 forms a Glycyl lysine isopeptide (Lys-Gly) (interchain with G-Cter in SUMO2) linkage. S223 is modified (phosphoserine).

Belongs to the mis18 family. As to quaternary structure, homodimer, and heterodimer with OIP5/MIS18B. Identified in a complex containing MIS18A, OIP5/MIS18B, MIS18BP1, RBBP7 and RBBP4.

Its subcellular location is the nucleus. The protein localises to the chromosome. It localises to the centromere. Required for recruitment of CENPA to centromeres and normal chromosome segregation during mitosis. The sequence is that of Protein Mis18-alpha (Mis18a) from Rattus norvegicus (Rat).